A 55-amino-acid chain; its full sequence is Large ribosomal subunit protein bL33 (55 aa).

It belongs to the bacterial ribosomal protein bL33 family.

This Methylorubrum extorquens (strain CM4 / NCIMB 13688) (Methylobacterium extorquens) protein is Large ribosomal subunit protein bL33.